A 64-amino-acid chain; its full sequence is Large ribosomal subunit protein bL35 (64 aa).

The segment at 1-55 is disordered; it reads MPKMKSNKSVAARFKLTGSGQLKRTRPGKRHKLSKRSSQQKRNLSKQPLVDQGQV. Residues 23–39 are compositionally biased toward basic residues; sequence KRTRPGKRHKLSKRSSQ.

The protein belongs to the bacterial ribosomal protein bL35 family.

This chain is Large ribosomal subunit protein bL35, found in Chlamydia muridarum (strain MoPn / Nigg).